The primary structure comprises 463 residues: NADH dehydrogenase [ubiquinone] iron-sulfur protein 2, mitochondrial (463 aa).

Residues 1-33 (MAALRALCGFRGVAAQVLRPGAGVRLPIQPSRG) constitute a mitochondrion transit peptide. Position 62 is an N6-acetyllysine (Lys-62). Residue Arg-118 is modified to Symmetric dimethylarginine. [4Fe-4S] cluster-binding residues include Cys-326, Cys-332, and Cys-347.

It belongs to the complex I 49 kDa subunit family. Core subunit of respiratory chain NADH dehydrogenase (Complex I) which is composed of 45 different subunits. Component of the iron-sulfur (IP) fragment of the enzyme. Interacts with NDUFAF3. Interacts with NDUFAF7. Interacts with CERS2. It depends on [4Fe-4S] cluster as a cofactor. In terms of processing, dimethylation at Arg-118 by NDUFAF7 takes place after NDUFS2 assembles into the complex I, leading to stabilize the early intermediate complex.

Its subcellular location is the mitochondrion inner membrane. It catalyses the reaction a ubiquinone + NADH + 5 H(+)(in) = a ubiquinol + NAD(+) + 4 H(+)(out). In terms of biological role, core subunit of the mitochondrial membrane respiratory chain NADH dehydrogenase (Complex I) which catalyzes electron transfer from NADH through the respiratory chain, using ubiquinone as an electron acceptor. Essential for the catalytic activity and assembly of complex I. Redox-sensitive, critical component of the oxygen-sensing pathway in the pulmonary vasculature which plays a key role in acute pulmonary oxygen-sensing and hypoxic pulmonary vasoconstriction. Plays an important role in carotid body sensing of hypoxia. Essential for glia-like neural stem and progenitor cell proliferation, differentiation and subsequent oligodendrocyte or neuronal maturation. The polypeptide is NADH dehydrogenase [ubiquinone] iron-sulfur protein 2, mitochondrial (NDUFS2) (Pan troglodytes (Chimpanzee)).